A 426-amino-acid chain; its full sequence is Glutamate-1-semialdehyde 2,1-aminomutase (426 aa).

Lys265 is modified (N6-(pyridoxal phosphate)lysine).

The protein belongs to the class-III pyridoxal-phosphate-dependent aminotransferase family. HemL subfamily. Homodimer. Pyridoxal 5'-phosphate is required as a cofactor.

The protein resides in the cytoplasm. The enzyme catalyses (S)-4-amino-5-oxopentanoate = 5-aminolevulinate. The protein operates within porphyrin-containing compound metabolism; protoporphyrin-IX biosynthesis; 5-aminolevulinate from L-glutamyl-tRNA(Glu): step 2/2. The chain is Glutamate-1-semialdehyde 2,1-aminomutase from Neisseria gonorrhoeae (strain ATCC 700825 / FA 1090).